The sequence spans 101 residues: Small ribosomal subunit protein uS14A (101 aa).

The disordered stretch occupies residues 47–66 (ALASLPRDSNPNRVTNRCAL).

Belongs to the universal ribosomal protein uS14 family. In terms of assembly, part of the 30S ribosomal subunit. Contacts proteins S3 and S10.

Binds 16S rRNA, required for the assembly of 30S particles and may also be responsible for determining the conformation of the 16S rRNA at the A site. This chain is Small ribosomal subunit protein uS14A, found in Myxococcus xanthus (strain DK1622).